A 37-amino-acid polypeptide reads, in one-letter code: Dolichyl-diphosphooligosaccharide--protein glycosyltransferase subunit 4B (37 aa).

The Lumenal segment spans residues 1 to 8; it reads MFDDQDLG. Residues 9–29 form a helical membrane-spanning segment; it reads FFANFLGIFIFVLVMAYHFVM. The Cytoplasmic portion of the chain corresponds to 30–37; that stretch reads ADVKYEGN.

It belongs to the OST4 family. Component of the oligosaccharyltransferase (OST) complex.

It is found in the endoplasmic reticulum membrane. Subunit of the oligosaccharyl transferase (OST) complex that catalyzes the initial transfer of a defined glycan (Glc(3)Man(9)GlcNAc(2) in eukaryotes) from the lipid carrier dolichol-pyrophosphate to an asparagine residue within an Asn-X-Ser/Thr consensus motif in nascent polypeptide chains, the first step in protein N-glycosylation. N-glycosylation occurs cotranslationally and the complex associates with the Sec61 complex at the channel-forming translocon complex that mediates protein translocation across the endoplasmic reticulum (ER). All subunits are required for a maximal enzyme activity. This chain is Dolichyl-diphosphooligosaccharide--protein glycosyltransferase subunit 4B (OST4B), found in Oryza sativa subsp. japonica (Rice).